A 444-amino-acid chain; its full sequence is EMI domain-containing protein 1 (444 aa).

The first 22 residues, 1 to 22 (MGGPRAWTLLCLGLLLPGGGAA), serve as a signal peptide directing secretion. The region spanning 33 to 106 (RRNWCSYVVT…PGHSGVTCEE (74 aa)) is the EMI domain. 3 cysteine pairs are disulfide-bonded: C37–C96, C62–C68, and C95–C104. An O-linked (Fuc) threonine glycan is attached at T42. N-linked (GlcNAc...) asparagine glycosylation is present at N51. An N-linked (GlcNAc...) asparagine glycan is attached at N136. 2 disordered regions span residues 161–374 (EQTV…KSHW) and 404–444 (PDLG…SERS). A Collagen-like domain is found at 221–371 (GPPGPQGPPG…PGPKGDPGEK (151 aa)). The segment covering 222–231 (PPGPQGPPGR) has biased composition (pro residues). Residues 232-243 (PGQTGAAGTPGK) show a composition bias toward low complexity. Pro residues-rich tracts occupy residues 244–264 (MGPPGPPGPPGPPGPPAPVGP) and 292–311 (PTGPPGPPGPPGPMGPPGLP).

Homo- or heteromers. In terms of processing, O-fucosylated at Thr-42 within the EMI domain by FUT10/POFUT3 and FUT11/POFUT4.

The protein localises to the secreted. It is found in the extracellular space. It localises to the extracellular matrix. This chain is EMI domain-containing protein 1 (Emid1), found in Mus musculus (Mouse).